The sequence spans 884 residues: Formin-like protein 9 (884 aa).

Residues 1–19 (MGMAMRCVLVLFSVSPVLL) form the signal peptide. Residues 140 to 160 (IVALGVVGLCLVVLGVVIAAF) traverse the membrane as a helical segment. Disordered regions lie at residues 179 to 204 (FHHG…PDPL), 295 to 318 (THDS…LSPK), and 403 to 473 (TMTN…PLPR). Over residues 300–310 (SDSSYQSLSPD) the composition is skewed to low complexity. Pro residues predominate over residues 429–443 (KPAPPPPPQKNPPPN). The FH2 domain occupies 464-884 (VGKDGSPLPR…QTLNLVLPLK (421 aa)).

This sequence belongs to the formin-like family. Class-I subfamily.

The protein resides in the membrane. In Oryza sativa subsp. indica (Rice), this protein is Formin-like protein 9 (FH9).